Reading from the N-terminus, the 133-residue chain is Interferon alpha-inducible protein 27-like protein 2 (133 aa).

The next 3 helical transmembrane spans lie at 8–28, 51–71, and 73–93; these read AAIG…AVGF, GGGV…AAGL, and TSSN…LGGA. Positions 93-133 are disordered; sequence AKRASPSPPPGGPRPEGEQPGENVPQVEPPKSPLGPEKHEK.

The protein belongs to the IFI6/IFI27 family.

Its subcellular location is the mitochondrion membrane. Plays a role in the apoptotic process and has a pro-apoptotic activity. The polypeptide is Interferon alpha-inducible protein 27-like protein 2 (Bos taurus (Bovine)).